We begin with the raw amino-acid sequence, 262 residues long: Glutamine-binding protein (262 aa).

An N-terminal signal peptide occupies residues 1–26 (MKRKTVWKIWITLALIALLSITALAG). Cysteine 27 is lipidated: N-palmitoyl cysteine. Residue cysteine 27 is the site of S-diacylglycerol cysteine attachment.

Belongs to the bacterial solute-binding protein 3 family.

Its subcellular location is the cell membrane. Its function is as follows. Involved in glutamine-transport system. Interacts with the glutamine-transport system GlnPQ. The polypeptide is Glutamine-binding protein (glnH) (Geobacillus stearothermophilus (Bacillus stearothermophilus)).